We begin with the raw amino-acid sequence, 365 residues long: Peridinin-chlorophyll a-binding protein, chloroplastic (365 aa).

The N-terminal 52 residues, 1–52, are a transit peptide targeting the chloroplast; that stretch reads MVRGARKAIAVGVAVAVACGLQKHLNFVPGPRHAAPVAAAAASMMMAPAAFA. 2 consecutive repeat copies span residues 53–215 and 216–365.

Monomer.

It localises to the plastid. Its subcellular location is the chloroplast. Functionally, water-soluble antenna for capture of solar energy in the blue-green range. Peridinin is an asymmetric carotenoid. The sequence is that of Peridinin-chlorophyll a-binding protein, chloroplastic from Symbiodinium sp. (Dinoflagellate).